Consider the following 518-residue polypeptide: Centromere protein T (518 aa).

The tract at residues 1 to 70 is disordered; sequence MADLSSPDGD…RKHSHGTGSV (70 aa). Over residues 19–28 the composition is skewed to basic and acidic residues; it reads HVLDTADSHT. Positions 34-57 are enriched in polar residues; the sequence is STQTNPQRRRSQTPYSKRQGSQRK. Residue T86 is modified to Phosphothreonine. The tract at residues 94–381 is flexible stalk domain; that stretch reads ILLTAPESST…EPHQLFEPPP (288 aa). Disordered regions lie at residues 102 to 156, 271 to 362, and 375 to 412; these read STVM…KRKQ, VHHS…ELSS, and QLFE…HQDP. Residues 294 to 306 show a composition bias toward polar residues; sequence TPSTGTRPQSQMS. S313, S324, S333, S345, S346, S357, and S382 each carry phosphoserine. The span at 326–343 shows a compositional bias: basic and acidic residues; it reads ELREAVGSKEAEEPKDLE. The segment covering 384-395 has biased composition (low complexity); it reads GVAAVSSESVPA.

It belongs to the CENP-T/CNN1 family. Component of the CENPA-CAD complex, composed of CENPI, CENPK, CENPL, CENPO, CENPP, CENPQ, CENPR and CENPS. The CENPA-CAD complex is probably recruited on centromeres by the CENPA-NAC complex, at least composed of CENPA, CENPC, CENPH, CENPM, CENPN, CENPT and CENPU. Identified in a centromeric complex containing histones H2A, H2B, H3 and H4, and at least CENPA, CENPB, CENPC, CENPT, CENPN, HJURP, SUPT16H, SSRP1 and RSF1. Interacts (via N-terminus) with the NDC80 complex. Heterodimer with CENPW; this dimer coassembles with CENPS-CENPX heterodimers at centromeres to form the tetrameric CENP-T-W-S-X complex. In terms of processing, dynamically phosphorylated during the cell cycle. Phosphorylated during G2 phase, metaphase and anaphase, but not during telophase or G1 phase.

The protein resides in the nucleus. Its subcellular location is the chromosome. It is found in the centromere. It localises to the kinetochore. Component of the CENPA-NAC (nucleosome-associated) complex, a complex that plays a central role in assembly of kinetochore proteins, mitotic progression and chromosome segregation. The CENPA-NAC complex recruits the CENPA-CAD (nucleosome distal) complex and may be involved in incorporation of newly synthesized CENPA into centromeres. Part of a nucleosome-associated complex that binds specifically to histone H3-containing nucleosomes at the centromere, as opposed to nucleosomes containing CENPA. Component of the heterotetrameric CENP-T-W-S-X complex that binds and supercoils DNA, and plays an important role in kinetochore assembly. CENPT has a fundamental role in kinetochore assembly and function. It is one of the inner kinetochore proteins, with most further proteins binding downstream. Required for normal chromosome organization and normal progress through mitosis. This is Centromere protein T (Cenpt) from Rattus norvegicus (Rat).